We begin with the raw amino-acid sequence, 254 residues long: Ribonuclease HII (254 aa).

Residues 70-254 (QAIAGIDEVG…TFEPIKSMYE (185 aa)) form the RNase H type-2 domain. Positions 76, 77, and 168 each coordinate a divalent metal cation.

Belongs to the RNase HII family. Requires Mn(2+) as cofactor. Mg(2+) serves as cofactor.

The protein localises to the cytoplasm. It carries out the reaction Endonucleolytic cleavage to 5'-phosphomonoester.. In terms of biological role, endonuclease that specifically degrades the RNA of RNA-DNA hybrids. The sequence is that of Ribonuclease HII from Streptococcus sanguinis (strain SK36).